Reading from the N-terminus, the 321-residue chain is GDP-L-fucose synthase (321 aa).

Position 14 to 20 (14 to 20) interacts with NADP(+); sequence GGSGLVG. Catalysis depends on Tyr-143, which acts as the Proton donor/acceptor. NADP(+) contacts are provided by residues Lys-147, 170–173, and His-186; that span reads PTNV. Residues Lys-194, Trp-208, Arg-215, and Asp-277 each coordinate substrate.

Belongs to the NAD(P)-dependent epimerase/dehydratase family. Fucose synthase subfamily. Homodimer.

It catalyses the reaction GDP-beta-L-fucose + NADP(+) = GDP-4-dehydro-alpha-D-rhamnose + NADPH + H(+). It functions in the pathway nucleotide-sugar biosynthesis; GDP-L-fucose biosynthesis via de novo pathway; GDP-L-fucose from GDP-alpha-D-mannose: step 2/2. In terms of biological role, catalyzes the two-step NADP-dependent conversion of GDP-4-dehydro-6-deoxy-D-mannose to GDP-fucose, involving an epimerase and a reductase reaction. In Cricetulus griseus (Chinese hamster), this protein is GDP-L-fucose synthase (GFUS).